We begin with the raw amino-acid sequence, 248 residues long: PF03932 family protein CutC (248 aa).

It belongs to the CutC family. In terms of assembly, homodimer.

It is found in the cytoplasm. This Salmonella enteritidis PT4 (strain P125109) protein is PF03932 family protein CutC.